We begin with the raw amino-acid sequence, 459 residues long: MGKEKTHINIVVIGHVDSGKSTTTGHLIYKCGGIDKRTIEKFEKEAQEMGKGSFKYAWVLDKLKAERERGITIDIALWKFETAKFYVTIIDAPGHRDFIKNMITGTSQADCAVLVVACGTGEFEAGISKNGQTREHALLAQTLGVKQMIVACNKMDSTEPPFSEKRFEEIITEVKSFIKKIGYNPATIPFVPISGFNGDNMLEPSANMSWYKGWSVERKEGNASGKTLLEALDCIIPPQRPTDRPLRLPLQDVYKIGGIGTVPVGRVETGVIKPGMVVTFAPQNVTTEVKSVEMHHESLPEAQPGDNVGFNEKNVSVKDIRRGSVCSDSKNDPAKESKSFTAQVIVMNHPGQIGAGYTPVLDCHTAHIACKFAELKEKVDRRTGKKVEDLPKFLKSGDAGIVELIPTKPLCVEAFTDYAPLGRFAVRDMRQTVAVGVIKGVTKDDGSSGKVTKSAQKKK.

Residues 5–242 (KTHINIVVIG…DCIIPPQRPT (238 aa)) form the tr-type G domain. Residues 14-21 (GHVDSGKS) are G1. Residues 70–74 (GITID) form a G2 region. Positions 91-94 (DAPG) are G3. Residues 153 to 156 (NKMD) are G4. The interval 194–196 (SGF) is G5. 2 positions are modified to 5-glutamyl glycerylphosphorylethanolamine: Glu-301 and Glu-374.

It belongs to the TRAFAC class translation factor GTPase superfamily. Classic translation factor GTPase family. EF-Tu/EF-1A subfamily.

It localises to the cytoplasm. In terms of biological role, this protein promotes the GTP-dependent binding of aminoacyl-tRNA to the A-site of ribosomes during protein biosynthesis. In Oscheius tipulae, this protein is Elongation factor 1-alpha 4 (eft-4).